We begin with the raw amino-acid sequence, 83 residues long: RNA-binding protein Hfq (83 aa).

The Sm domain maps to 10–70 (DAFLNQLRKE…ISTVSPSRPV (61 aa)).

The protein belongs to the Hfq family. Homohexamer.

RNA chaperone that binds small regulatory RNA (sRNAs) and mRNAs to facilitate mRNA translational regulation in response to envelope stress, environmental stress and changes in metabolite concentrations. Also binds with high specificity to tRNAs. This Desulforudis audaxviator (strain MP104C) protein is RNA-binding protein Hfq.